Reading from the N-terminus, the 359-residue chain is 3-isopropylmalate dehydrogenase (359 aa).

Residues Arg-97, Arg-107, Arg-135, and Asp-224 each coordinate substrate. Mg(2+) contacts are provided by Asp-224, Asp-248, and Asp-252. 282–294 (GSAPDIAGKDIAN) provides a ligand contact to NAD(+).

Belongs to the isocitrate and isopropylmalate dehydrogenases family. LeuB type 1 subfamily. As to quaternary structure, homodimer. The cofactor is Mg(2+). Mn(2+) is required as a cofactor.

Its subcellular location is the cytoplasm. The enzyme catalyses (2R,3S)-3-isopropylmalate + NAD(+) = 4-methyl-2-oxopentanoate + CO2 + NADH. Its pathway is amino-acid biosynthesis; L-leucine biosynthesis; L-leucine from 3-methyl-2-oxobutanoate: step 3/4. Catalyzes the oxidation of 3-carboxy-2-hydroxy-4-methylpentanoate (3-isopropylmalate) to 3-carboxy-4-methyl-2-oxopentanoate. The product decarboxylates to 4-methyl-2 oxopentanoate. The sequence is that of 3-isopropylmalate dehydrogenase from Prochlorococcus marinus (strain NATL2A).